The following is a 120-amino-acid chain: Crustacean hyperglycemic hormones 2 (120 aa).

Residues 1–27 form the signal peptide; sequence MIAFHMVWSALLASLLLLLLAPSASPV. Disulfide bonds link cysteine 53-cysteine 89, cysteine 69-cysteine 85, and cysteine 72-cysteine 98. Valine amide is present on valine 118.

This sequence belongs to the arthropod CHH/MIH/GIH/VIH hormone family.

It is found in the secreted. Functionally, hormone found in the sinus gland of isopods and decapods which controls the blood sugar level. Has a secretagogue action over the amylase released from the midgut gland. May act as a stress hormone and may be involved in the control of molting and reproduction. This is Crustacean hyperglycemic hormones 2 from Penaeus japonicus (Kuruma prawn).